The following is a 715-amino-acid chain: uncharacterized protein (715 aa).

This is an uncharacterized protein from Mycobacterium tuberculosis (strain CDC 1551 / Oshkosh).